A 270-amino-acid chain; its full sequence is Transmembrane protein 176B (270 aa).

The next 4 membrane-spanning stretches (helical) occupy residues 65 to 85 (LALGVTQILLGVVSCVLGVCL), 95 to 115 (ASGCAFWAGSVVIAAGAGAIV), 127 to 147 (ISSLLTLAGFATAMAAVVLCV), and 209 to 229 (LFLAVCVLKVIVSLVSLGVGL). 4 positions are modified to phosphoserine: serine 236, serine 245, serine 254, and serine 258. Residues 237–270 (SQPLNEEGSEKRLLGENSVPPSPSREQTSTAIVL) are disordered. Residues 260–270 (SREQTSTAIVL) show a composition bias toward polar residues.

It belongs to the TMEM176 family. As to expression, expressed in lung and dermal fibroblasts.

It localises to the nucleus membrane. In terms of biological role, may play a role in the process of maturation of dendritic cells. Required for the development of cerebellar granule cells. In Homo sapiens (Human), this protein is Transmembrane protein 176B (TMEM176B).